Reading from the N-terminus, the 677-residue chain is Fidgetin-like protein 1 (677 aa).

The segment covering 203-216 has biased composition (polar residues); that stretch reads TSSAPSGESTTATF. Disordered stretches follow at residues 203 to 232, 249 to 324, and 337 to 378; these read TSSAPSGESTTATFHRTPLFGNTKKEPQSF, VPSG…SFNG, and GIFG…TDDR. Residue Lys226 forms a Glycyl lysine isopeptide (Lys-Gly) (interchain with G-Cter in SUMO2) linkage. Residues 264-280 are compositionally biased toward polar residues; that stretch reads DSDTINMLSNPTLNKAP. A compositionally biased stretch (basic and acidic residues) spans 281–292; sequence SKTEDSGQREDN. An N6-acetyllysine modification is found at Lys341. The span at 347-358 shows a compositional bias: polar residues; the sequence is SNKQDGSEQNGN. Residues Ala407 and 447 to 452 each bind ATP; that span reads GTGKTL.

The protein belongs to the AAA ATPase family. In terms of assembly, hexamer. Interacts (via N-terminal one-half region) with RAD51; the interaction is direct. Interacts (via N-terminal one-half region) with SPIDR (via the C-terminal region); the interaction is direct. Interacts with FIRRM; may regulate homologous recombination. It depends on Mg(2+) as a cofactor.

The protein localises to the nucleus. Its subcellular location is the cytoplasm. It localises to the perinuclear region. The catalysed reaction is ATP + H2O = ADP + phosphate + H(+). Its function is as follows. Involved in DNA double-strand break (DBS) repair via homologous recombination (HR). Recruited at DSB sites independently of BRCA2, RAD51 and RAD51 paralogs in a H2AX-dependent manner. May regulate osteoblast proliferation and differentiation. May play a role in the control of male meiosis dynamic. In Rattus norvegicus (Rat), this protein is Fidgetin-like protein 1 (Fignl1).